The primary structure comprises 352 residues: MQRYPTKQIKIRDVAIGGDAPIPVQSMTFSKTKDVKGTLAQIQRLYFAGCDIVRCAVLDKEDAKALREIVAKSPLPVVADIHFNHIYAVMVSEYVDAIRINPGNIGSKERIKAVVDACKQRKIPIRIGVNSGSLEKQFEERYGRSVEAMVASAMYNINLLEDFDFTDIKISLKSSDVERTMQAYRTLRPKVPYPFHLGVTEAGTTFHATIKSAIALGGLLLEGIGDTMRVSITGELEEEIKVAKAILKDSGRQREGLNIISCPTCGRLQSDLMKAIKIVEEKTKHIKEPLNVSVMGCVVNAIGEAKGADVAIAFGKESGLIMRRGEVVARLKESELVDRFLAEIDDEIKSRE.

Positions 262, 265, 297, and 304 each coordinate [4Fe-4S] cluster.

This sequence belongs to the IspG family. The cofactor is [4Fe-4S] cluster.

It carries out the reaction (2E)-4-hydroxy-3-methylbut-2-enyl diphosphate + oxidized [flavodoxin] + H2O + 2 H(+) = 2-C-methyl-D-erythritol 2,4-cyclic diphosphate + reduced [flavodoxin]. Its pathway is isoprenoid biosynthesis; isopentenyl diphosphate biosynthesis via DXP pathway; isopentenyl diphosphate from 1-deoxy-D-xylulose 5-phosphate: step 5/6. Functionally, converts 2C-methyl-D-erythritol 2,4-cyclodiphosphate (ME-2,4cPP) into 1-hydroxy-2-methyl-2-(E)-butenyl 4-diphosphate. The protein is 4-hydroxy-3-methylbut-2-en-1-yl diphosphate synthase (flavodoxin) of Campylobacter curvus (strain 525.92).